Here is an 83-residue protein sequence, read N- to C-terminus: Apolipoprotein C-I, basic form (83 aa).

The N-terminal stretch at 1 to 26 (MRLFLSLPVLVVVLSMVLEGPAPAQG) is a signal peptide.

This sequence belongs to the apolipoprotein C1 family.

The protein localises to the secreted. Its function is as follows. Inhibitor of lipoprotein binding to the low density lipoprotein (LDL) receptor, LDL receptor-related protein, and very low density lipoprotein (VLDL) receptor. Associates with high density lipoproteins (HDL) and the triacylglycerol-rich lipoproteins in the plasma and makes up about 10% of the protein of the VLDL and 2% of that of HDL. Appears to interfere directly with fatty acid uptake and is also the major plasma inhibitor of cholesteryl ester transfer protein (CETP). Binds free fatty acids and reduces their intracellular esterification. Modulates the interaction of APOE with beta-migrating VLDL and inhibits binding of beta-VLDL to the LDL receptor-related protein. In Colobus guereza (Mantled guereza), this protein is Apolipoprotein C-I, basic form (APOC1B).